The following is a 365-amino-acid chain: Outer capsid protein sigma-3 (365 aa).

The CCHC-type zinc-finger motif lies at 51-73 (CMHCLGVVGSLQRKLKHLPHHRC).

It belongs to the orthoreovirus sigma-3 protein family. Heterohexamer of three sigma-3 and three Mu-1 proteins. The RNA-binding form is probably a homodimer. In terms of processing, cleaved during virus the endosomal proteolytic disassembly of the outer capsid.

It is found in the virion. Functionally, stimulates translation by blocking the activation of the dsRNA-dependent protein kinase EIF2AK2/PKR, thereby inhibiting the host interferon response. Sigma3 prevents the activation of EIF2AK2 by competing with the kinase for dsRNA-binding. In terms of biological role, the viral outer shell polypeptides, of which sigma-3 is one, impose structural constraints that prevent elongation of nascent transcripts by the RNA-dependent RNA polymerase lambda-3. This Mammalia (T1L) protein is Outer capsid protein sigma-3 (S4).